The following is a 131-amino-acid chain: Profilin-7 (131 aa).

An intrachain disulfide couples C13 to C115. The Involved in PIP2 interaction motif lies at 81–97 (AVIRGKKGSGGITVKKT). T111 carries the post-translational modification Phosphothreonine.

This sequence belongs to the profilin family. Occurs in many kinds of cells as a complex with monomeric actin in a 1:1 ratio. In terms of processing, phosphorylated by MAP kinases.

Its subcellular location is the cytoplasm. The protein localises to the cytoskeleton. In terms of biological role, binds to actin and affects the structure of the cytoskeleton. At high concentrations, profilin prevents the polymerization of actin, whereas it enhances it at low concentrations. This is Profilin-7 from Zea mays (Maize).